Reading from the N-terminus, the 145-residue chain is Small ribosomal subunit protein uS17c (145 aa).

The transit peptide at 1-36 directs the protein to the chloroplast; it reads MLLTTPFVSSPVRVQGNGGSGASPWAGAATALRIQA. Residues 101 to 145 are disordered; sequence KTKHFLAVPLPPRDTRRKSQLLPPLQSQSQSQDQDQPPTPPPSSD. The span at 120–136 shows a compositional bias: low complexity; that stretch reads QLLPPLQSQSQSQDQDQ.

Belongs to the universal ribosomal protein uS17 family. In terms of assembly, part of the 30S ribosomal subunit.

It is found in the plastid. The protein resides in the chloroplast. Functionally, one of the primary rRNA binding proteins, it binds specifically to the 5'-end of 16S ribosomal RNA. This is Small ribosomal subunit protein uS17c (RPS17) from Oryza sativa subsp. japonica (Rice).